Reading from the N-terminus, the 288-residue chain is Phosphatidate cytidylyltransferase (288 aa).

Helical transmembrane passes span 10–30 (IVLIAAVLCALFLFTPFYFAL), 52–72 (PLIRFFVTTFLGVFIFLWLYT), 89–109 (LLLINAVSWWGLALLLVISYP), 118–138 (NPLLQLLFAFSTLIPFVAGVL), 152–172 (GLFLLLYVFILVWAADSGAYF), 192–212 (WEGVIGGLITALVLAFIFIHF), and 223–243 (ITGFIILSVATVAISVLGDLT).

This sequence belongs to the CDS family.

Its subcellular location is the cell inner membrane. The enzyme catalyses a 1,2-diacyl-sn-glycero-3-phosphate + CTP + H(+) = a CDP-1,2-diacyl-sn-glycerol + diphosphate. Its pathway is phospholipid metabolism; CDP-diacylglycerol biosynthesis; CDP-diacylglycerol from sn-glycerol 3-phosphate: step 3/3. The sequence is that of Phosphatidate cytidylyltransferase (cdsA) from Haemophilus influenzae (strain ATCC 51907 / DSM 11121 / KW20 / Rd).